The sequence spans 214 residues: Protein transport protein SEC22 (214 aa).

Topologically, residues 1–192 are cytoplasmic; the sequence is MIKSTLIYRE…QKINFDLLIS (192 aa). Residues 6-117 form the Longin domain; it reads LIYREDGLPL…YQFVNFDNFL (112 aa). Residues 132–192 form the v-SNARE coiled-coil homology domain; that stretch reads NLDQLNQELV…QKINFDLLIS (61 aa). Ser-160 bears the Phosphoserine mark. A helical; Anchor for type IV membrane protein membrane pass occupies residues 193–213; it reads QYAPIVIVAFFFVFLFWWIFL. Lys-214 is a topological domain (vesicular).

It belongs to the synaptobrevin family. In terms of assembly, component of two distinct SNARE complexes consisting of SED5, BOS1, BET1 and SEC22 or UFE1, USE1, SEC20 and SEC22. YKT6 can probably replace SEC22 as subunit of either complex. Interacts with SEC24, YIF1 and YIP1.

It localises to the membrane. The protein resides in the endoplasmic reticulum membrane. It is found in the golgi apparatus membrane. Functionally, nonessential SNARE involved in targeting and fusion of ER-derived transport vesicles with the Golgi complex as well as Golgi-derived retrograde transport vesicles with the ER. The chain is Protein transport protein SEC22 (SEC22) from Saccharomyces cerevisiae (strain ATCC 204508 / S288c) (Baker's yeast).